The sequence spans 413 residues: Serine/threonine transporter SstT (413 aa).

A run of 9 helical transmembrane segments spans residues 11 to 31 (IANG…VILA), 43 to 63 (FLGS…VFVL), 82 to 102 (IIGL…LFSF), 141 to 161 (ALLT…GITM), 192 to 212 (IGIF…ALAG), 216 to 236 (LLMV…PIIV), 298 to 318 (MGGA…TLGI), 339 to 359 (ASGV…LFGI), and 363 to 383 (VAMQ…SAET).

The protein belongs to the dicarboxylate/amino acid:cation symporter (DAACS) (TC 2.A.23) family.

The protein resides in the cell inner membrane. The catalysed reaction is L-serine(in) + Na(+)(in) = L-serine(out) + Na(+)(out). It carries out the reaction L-threonine(in) + Na(+)(in) = L-threonine(out) + Na(+)(out). Functionally, involved in the import of serine and threonine into the cell, with the concomitant import of sodium (symport system). The sequence is that of Serine/threonine transporter SstT from Shewanella frigidimarina (strain NCIMB 400).